The chain runs to 89 residues: Small ribosomal subunit protein uS14A (89 aa).

Belongs to the universal ribosomal protein uS14 family. Part of the 30S ribosomal subunit. Contacts proteins S3 and S10.

In terms of biological role, binds 16S rRNA, required for the assembly of 30S particles and may also be responsible for determining the conformation of the 16S rRNA at the A site. The polypeptide is Small ribosomal subunit protein uS14A (Staphylococcus epidermidis (strain ATCC 35984 / DSM 28319 / BCRC 17069 / CCUG 31568 / BM 3577 / RP62A)).